We begin with the raw amino-acid sequence, 374 residues long: O-methyltransferase 16 (374 aa).

S-adenosyl-L-homocysteine-binding residues include Ser195, Gly219, Asp242, Asp262, and Lys276. Residue Asp242 participates in S-adenosyl-L-methionine binding. His280 acts as the Proton acceptor in catalysis.

The protein belongs to the class I-like SAM-binding methyltransferase superfamily. Cation-independent O-methyltransferase family. In terms of assembly, homodimer. In terms of tissue distribution, expressed mainly in vasculature and cortex tissues at low levels.

The enzyme catalyses dopamine + S-adenosyl-L-methionine = 4-methoxytyramine + S-adenosyl-L-homocysteine + H(+). It participates in aromatic compound metabolism. It functions in the pathway alkaloid biosynthesis. In terms of biological role, O-methyltransferase participating in the biosynthesis of natural products derived from phenylethylamine, including mescaline, a natural hallucinogen potentially used in psychotherapeutic treatments. Catalyzes the O-methylation of dopamine to produce 4-methoxytyramine. The polypeptide is O-methyltransferase 16 (Lophophora williamsii (Peyote)).